A 336-amino-acid polypeptide reads, in one-letter code: Adenosine deaminase (336 aa).

Zn(2+)-binding residues include H15 and H17. Residues H17, D19, and G172 each contribute to the substrate site. Residue H199 participates in Zn(2+) binding. E202 (proton donor) is an active-site residue. Residue D279 participates in Zn(2+) binding.

Belongs to the metallo-dependent hydrolases superfamily. Adenosine and AMP deaminases family. Adenosine deaminase subfamily. It depends on Zn(2+) as a cofactor.

The enzyme catalyses adenosine + H2O + H(+) = inosine + NH4(+). It carries out the reaction 2'-deoxyadenosine + H2O + H(+) = 2'-deoxyinosine + NH4(+). Functionally, catalyzes the hydrolytic deamination of adenosine and 2-deoxyadenosine. This chain is Adenosine deaminase, found in Streptococcus thermophilus (strain ATCC BAA-491 / LMD-9).